Here is a 152-residue protein sequence, read N- to C-terminus: Aspartate carbamoyltransferase regulatory chain (152 aa).

Residues C108, C113, C137, and C140 each coordinate Zn(2+).

The protein belongs to the PyrI family. Contains catalytic and regulatory chains. Zn(2+) is required as a cofactor.

In terms of biological role, involved in allosteric regulation of aspartate carbamoyltransferase. The sequence is that of Aspartate carbamoyltransferase regulatory chain from Neisseria gonorrhoeae (strain ATCC 700825 / FA 1090).